The primary structure comprises 329 residues: Glutamyl-Q tRNA(Asp) synthetase (329 aa).

L-glutamate contacts are provided by residues 8-12 (RLAPS) and Glu44. The 'HIGH' region motif lies at 11 to 21 (PSPTGAQHLGN). The Zn(2+) site is built by Cys100, Cys102, Tyr129, and Cys133. Positions 196 and 214 each coordinate L-glutamate. Positions 252–256 (RLAKR) match the 'KMSKS' region motif. Residue Lys255 participates in ATP binding.

The protein belongs to the class-I aminoacyl-tRNA synthetase family. GluQ subfamily. It depends on Zn(2+) as a cofactor.

Its function is as follows. Catalyzes the tRNA-independent activation of glutamate in presence of ATP and the subsequent transfer of glutamate onto a tRNA(Asp). Glutamate is transferred on the 2-amino-5-(4,5-dihydroxy-2-cyclopenten-1-yl) moiety of the queuosine in the wobble position of the QUC anticodon. This Rhodopirellula baltica (strain DSM 10527 / NCIMB 13988 / SH1) protein is Glutamyl-Q tRNA(Asp) synthetase.